Here is a 152-residue protein sequence, read N- to C-terminus: UPF0266 membrane protein YobD (152 aa).

3 consecutive transmembrane segments (helical) span residues 6–26, 45–65, and 67–87; these read LVLI…QFIM, VDSV…VTSH, and AQMT…IFWI.

The protein belongs to the UPF0266 family.

The protein resides in the cell inner membrane. This chain is UPF0266 membrane protein YobD, found in Salmonella newport (strain SL254).